We begin with the raw amino-acid sequence, 314 residues long: BRCA2 and CDKN1A-interacting protein (314 aa).

The tract at residues 1 to 56 (MASRSKRRAVESGVPQPPDPPVQRDEEEEKEVENEDEDDDDSDKEKDEEDEVIDEE) is disordered. Residues 25–56 (DEEEEKEVENEDEDDDDSDKEKDEEDEVIDEE) are compositionally biased toward acidic residues. Phosphoserine occurs at positions 42 and 112. Residues 59 to 167 (IEFEAYSLSD…EKSMVEQLDK (109 aa)) are interaction with BRCA2. Residues 161–259 (MVEQLDKFLN…NAEEEFFYEK (99 aa)) form an interaction with CDKN1A region. Ser-281 is modified (phosphoserine).

The protein belongs to the BCP1 family. As to quaternary structure, interacts with BRCA2, CDKN1A and MTDH/LYRIC. Isoform 2/alpha, but not isoform 1/beta, interacts with DCTN1/p150-glued and ACTR1A/ARP1. Both isoform 1 and isoform 2 interact with alpha-, beta- and gamma-tubulins. Interacts with TENT5C; the interaction has no effect on TENT5C poly(A) polymerase function. Expressed at high levels in testis and skeletal muscle and at lower levels in brain, heart, kidney, liver, lung, ovary, pancreas, placenta, and spleen.

The protein resides in the nucleus. It is found in the cytoplasm. It localises to the cytoskeleton. Its subcellular location is the microtubule organizing center. The protein localises to the centrosome. The protein resides in the centriole. It is found in the spindle pole. In terms of biological role, during interphase, required for microtubule organizing and anchoring activities. During mitosis, required for the organization and stabilization of the spindle pole. Isoform 2/alpha is particularly important for the regulation of microtubule anchoring, microtubule stability, spindle architecture and spindle orientation, compared to isoform 1/beta. May promote cell cycle arrest by enhancing the inhibition of CDK2 activity by CDKN1A. May be required for repair of DNA damage by homologous recombination in conjunction with BRCA2. May not be involved in non-homologous end joining (NHEJ). The sequence is that of BRCA2 and CDKN1A-interacting protein (BCCIP) from Homo sapiens (Human).